A 107-amino-acid polypeptide reads, in one-letter code: Multidrug resistance protein mmr (107 aa).

The next 4 membrane-spanning stretches (helical) occupy residues 2 to 19, 29 to 51, 58 to 80, and 84 to 106; these read IYLY…ATSL, LWPT…LSIS, VAYA…LFLG, and SVMK…LAGA.

It belongs to the drug/metabolite transporter (DMT) superfamily. Small multidrug resistance (SMR) (TC 2.A.7.1) family. Mmr subfamily.

The protein localises to the cell membrane. Its function is as follows. Multidrug efflux pump. Confers resistance to tetraphenylphosphonium (TPP), erythromycin, ethidium bromide, acriflavine, safranin O and pyronin Y. The chain is Multidrug resistance protein mmr (mmr) from Mycobacterium bovis (strain ATCC BAA-935 / AF2122/97).